The chain runs to 1416 residues: DNA-directed RNA polymerase subunit beta' (1416 aa).

4 residues coordinate Zn(2+): Cys-71, Cys-73, Cys-86, and Cys-89. The Mg(2+) site is built by Asp-461, Asp-463, and Asp-465. Residues Cys-815, Cys-889, Cys-896, and Cys-899 each contribute to the Zn(2+) site.

Belongs to the RNA polymerase beta' chain family. In terms of assembly, the RNAP catalytic core consists of 2 alpha, 1 beta, 1 beta' and 1 omega subunit. When a sigma factor is associated with the core the holoenzyme is formed, which can initiate transcription. Requires Mg(2+) as cofactor. Zn(2+) serves as cofactor.

It catalyses the reaction RNA(n) + a ribonucleoside 5'-triphosphate = RNA(n+1) + diphosphate. Functionally, DNA-dependent RNA polymerase catalyzes the transcription of DNA into RNA using the four ribonucleoside triphosphates as substrates. This chain is DNA-directed RNA polymerase subunit beta', found in Haemophilus influenzae (strain 86-028NP).